A 62-amino-acid polypeptide reads, in one-letter code: Large ribosomal subunit protein bL28 (62 aa).

This sequence belongs to the bacterial ribosomal protein bL28 family.

This is Large ribosomal subunit protein bL28 from Streptococcus gordonii (strain Challis / ATCC 35105 / BCRC 15272 / CH1 / DL1 / V288).